The primary structure comprises 374 residues: Peptide chain release factor 2 (374 aa).

Position 252 is an N5-methylglutamine (Gln-252).

The protein belongs to the prokaryotic/mitochondrial release factor family. In terms of processing, methylated by PrmC. Methylation increases the termination efficiency of RF2.

The protein localises to the cytoplasm. Functionally, peptide chain release factor 2 directs the termination of translation in response to the peptide chain termination codons UGA and UAA. This chain is Peptide chain release factor 2, found in Stenotrophomonas maltophilia (strain R551-3).